A 111-amino-acid chain; its full sequence is Estrogen receptor (111 aa).

The interval 1-42 is disordered; it reads PSGYAVREAGPPAYYRPNSDNRRQGGRERLASTSDKGSMAVE. Residues 1 to 49 form a modulating region; that stretch reads PSGYAVREAGPPAYYRPNSDNRRQGGRERLASTSDKGSMAVESAKETRY. Basic and acidic residues predominate over residues 19–30; the sequence is SDNRRQGGRERL. Ser-32 is subject to Phosphoserine. 2 consecutive NR C4-type zinc fingers follow at residues 50–70 and 86–110; these read CAVCNDYASGYHYGVWSCEGC and CPATNQCTIDKNRRKSCQACRLRKC. A DNA-binding region (nuclear receptor) is located at residues 50–111; the sequence is CAVCNDYASG…CQACRLRKCY (62 aa).

Belongs to the nuclear hormone receptor family. NR3 subfamily. Binds DNA as a homodimer. Can form a heterodimer with ESR2. Interacts with coactivator NCOA5. Interacts with PELP1, the interaction is enhanced by 17-beta-estradiol; the interaction increases ESR1 transcriptional activity. Interacts with NCOA7; the interaction is ligand-inducible. Interacts with AKAP13, CUEDC2, HEXIM1, KDM5A, MAP1S, SMARD1, and UBE1C. Interacts with MUC1; the interaction is stimulated by 7 beta-estradiol (E2) and enhances ESR1-mediated transcription. Interacts with DNTTIP2, and UIMC1. Interacts with KMT2D/MLL2. Interacts with ATAD2; the interaction is enhanced by estradiol. Interacts with KIF18A and LDB1. Interacts with RLIM (via its C-terminus). Interacts with MACROD1. Interacts with SH2D4A and PLCG. Interacts with SH2D4A; the interaction blocks binding to PLCG and inhibits estrogen-induced cell proliferation. Interacts with DYNLL1. Interacts with CCDC62; the interaction requires estradiol and appears to enhance the transcription of target genes. Interacts with NR2C1; the interaction prevents homodimerization of ESR1 and suppresses its transcriptional activity and cell growth. Interacts with DNAAF4. Interacts with PRMT2. Interacts with RBFOX2. Interacts with EP300; the interaction is estrogen-dependent and enhanced by CITED1. Interacts with CITED1; the interaction is estrogen-dependent. Interacts with FAM120B, FOXL2, PHB2 and SLC30A9. Interacts with coactivators NCOA3 and NCOA6. Interacts with STK3/MST2 only in the presence of SAV1 and vice-versa. Binds to CSNK1D. Interacts with NCOA2; NCOA2 can interact with ESR1 AF-1 and AF-2 domains simultaneously and mediate their transcriptional synergy. Interacts with DDX5. Interacts with NCOA1; the interaction seems to require a self-association of N-terminal and C-terminal regions. Interacts with ZNF366, DDX17, NFKB1, RELA, SP1 and SP3. Interacts with NRIP1. Interacts with GPER1; the interaction occurs in an estrogen-dependent manner. Interacts with CLOCK and the interaction is stimulated by estrogen. Interacts with TRIP4 (ufmylated); estrogen dependent. Interacts with LMTK3; the interaction phosphorylates ESR1 (in vitro) and protects it against proteasomal degradation. Interacts with CCAR2 (via N-terminus) in a ligand-independent manner. Interacts with ZFHX3. Interacts with SFR1 in a ligand-dependent and -independent manner. Interacts with DCAF13, LATS1 and DCAF1; regulates ESR1 ubiquitination and ubiquitin-mediated proteasomal degradation. Interacts (via DNA-binding domain) with POU4F2 (C-terminus); this interaction increases the estrogen receptor ESR1 transcriptional activity in a DNA- and ligand 17-beta-estradiol-independent manner. Interacts with ESRRB isoform 1. Interacts with UBE3A and WBP2. Interacts with GTF2B. Interacts with RBM39. In the absence of hormonal ligand, interacts with TACC1. Interacts with PI3KR1 or PI3KR2 and PTK2/FAK1. Interacts with SRC. Interacts with BAG1; the interaction is promoted in the absence of estradiol (17-beta-estradiol/E2). Interacts with and ubiquitinated by STUB1; the interaction is promoted in the absence of estradiol (17-beta-estradiol/E2). Interacts with NEDD8. In terms of processing, ubiquitinated; regulated by LATS1 via DCAF1 it leads to ESR1 proteasomal degradation. Deubiquitinated by OTUB1. Ubiquitinated by STUB1/CHIP; in the CA1 hippocampal region following loss of endogenous circulating estradiol (17-beta-estradiol/E2). Ubiquitinated by UBR5, leading to its degradation: UBR5 specifically recognizes and binds ligand-bound ESR1 when it is not associated with coactivators (NCOAs). In presence of NCOAs, the UBR5-degron is not accessible, preventing its ubiquitination and degradation. Post-translationally, dimethylated by PRMT1. Demethylated by JMJD6. Palmitoylated by ZDHHC7 and ZDHHC21. This modification is required for plasma membrane targeting and for rapid intracellular signaling via ERK and AKT kinases and cAMP generation, but not for signaling mediated by the nuclear hormone receptor. In terms of processing, phosphorylated by cyclin A/CDK2 and CK1. Phosphorylation probably enhances transcriptional activity. Dephosphorylation by PPP5C inhibits its transactivation activity. Phosphorylated by LMTK3 (in vitro).

It is found in the nucleus. It localises to the cytoplasm. Its subcellular location is the golgi apparatus. The protein resides in the cell membrane. In terms of biological role, nuclear hormone receptor. The steroid hormones and their receptors are involved in the regulation of eukaryotic gene expression and affect cellular proliferation and differentiation in target tissues. Ligand-dependent nuclear transactivation involves either direct homodimer binding to a palindromic estrogen response element (ERE) sequence or association with other DNA-binding transcription factors, such as AP-1/c-Jun, c-Fos, ATF-2, Sp1 and Sp3, to mediate ERE-independent signaling. Ligand binding induces a conformational change allowing subsequent or combinatorial association with multiprotein coactivator complexes through LXXLL motifs of their respective components. Mutual transrepression occurs between the estrogen receptor (ER) and NF-kappa-B in a cell-type specific manner. Decreases NF-kappa-B DNA-binding activity and inhibits NF-kappa-B-mediated transcription from the IL6 promoter and displace RELA/p65 and associated coregulators from the promoter. Recruited to the NF-kappa-B response element of the CCL2 and IL8 promoters and can displace CREBBP. Present with NF-kappa-B components RELA/p65 and NFKB1/p50 on ERE sequences. Can also act synergistically with NF-kappa-B to activate transcription involving respective recruitment adjacent response elements; the function involves CREBBP. Can activate the transcriptional activity of TFF1. Also mediates membrane-initiated estrogen signaling involving various kinase cascades. Essential for MTA1-mediated transcriptional regulation of BRCA1 and BCAS3. Maintains neuronal survival in response to ischemic reperfusion injury when in the presence of circulating estradiol (17-beta-estradiol/E2). This chain is Estrogen receptor (ESR1), found in Ovis aries (Sheep).